An 897-amino-acid polypeptide reads, in one-letter code: Coiled-coil domain-containing protein lobo (897 aa).

The interval 27–49 (EIDEQRRSQGSESDFADEMEGEF) is disordered. Residues 40–49 (DFADEMEGEF) are compositionally biased toward acidic residues. 2 coiled-coil regions span residues 269 to 306 (DLKS…DLEL) and 801 to 858 (SLLN…QRLT).

Belongs to the DRC7 family. In terms of tissue distribution, testis-specific (at protein level).

It localises to the cell projection. The protein resides in the cilium. It is found in the flagellum. Its subcellular location is the cytoplasm. The protein localises to the cytoskeleton. It localises to the cilium axoneme. Its function is as follows. Key component of the nexin-dynein regulatory complex (N-DRC), essential for N-DRC integrity. Involved in the regulation of flagellar motility. Involved in sperm motility. Required for the sperm to enter in the coiled storage seminal receptacle (SR) tubule. The chain is Coiled-coil domain-containing protein lobo (lobo) from Drosophila melanogaster (Fruit fly).